The sequence spans 100 residues: Small ribosomal subunit protein uS14c (100 aa).

Belongs to the universal ribosomal protein uS14 family. As to quaternary structure, part of the 30S ribosomal subunit.

It localises to the plastid. The protein resides in the chloroplast. Its function is as follows. Binds 16S rRNA, required for the assembly of 30S particles. This is Small ribosomal subunit protein uS14c from Cucumis sativus (Cucumber).